We begin with the raw amino-acid sequence, 726 residues long: Probable cyclic nucleotide-gated ion channel 14 (726 aa).

Residues 1-86 (MEFKRDNTVR…GDAVLQWNRV (86 aa)) lie on the Cytoplasmic side of the membrane. A helical transmembrane segment spans residues 87–107 (FLFWCLVALYVDPLFFFLSSV). Over 108–122 (KRIGRSSCMTTDLKL) the chain is Extracellular. Residues 123 to 143 (GIVITFFRTLADLFYVLHIVI) traverse the membrane as a helical segment. Residues 144 to 177 (KFRTAYVSRTSRVFGRGELVKDPKLIARRYLRSD) lie on the Cytoplasmic side of the membrane. The chain crosses the membrane as a helical span at residues 178–198 (FIVDLIACLPLPQIVSWFILP). At 199–211 (SIRSSHSDHTTNA) the chain is on the extracellular side. A helical membrane pass occupies residues 212–232 (LVLIVLVQYIPRLYLIFPLSA). The Cytoplasmic portion of the chain corresponds to 233 to 252 (EIIKATGVVTTTAWAGAAYN). Residues 253 to 273 (LLQYMLASHILGSAWYLLSIE) form a helical membrane-spanning segment. The Extracellular segment spans residues 274 to 377 (RQATCWKAEC…LSTSTSVLET (104 aa)). A helical transmembrane segment spans residues 378–398 (MFAILVAIFGLVLFALLIGNM). The Cytoplasmic segment spans residues 399 to 726 (QTYLQSITVR…PDEPDFSVDD (328 aa)). A nucleoside 3',5'-cyclic phosphate is bound by residues 481 to 605 (LFAQ…SKKL) and E552. A calmodulin-binding region spans residues 597–612 (FRRLHSKKLQHTFRYY). The IQ domain maps to 617–646 (RTWAACFVQVAWRRYKRKKLAKSLSLAESF). The interval 707 to 726 (KDVEIPMLPKPDEPDFSVDD) is disordered.

The protein belongs to the cyclic nucleotide-gated cation channel (TC 1.A.1.5) family. As to quaternary structure, homotetramer or heterotetramer.

It is found in the cell membrane. In terms of biological role, probable cyclic nucleotide-gated ion channel. The protein is Probable cyclic nucleotide-gated ion channel 14 (CNGC14) of Arabidopsis thaliana (Mouse-ear cress).